A 349-amino-acid polypeptide reads, in one-letter code: Ribosomal RNA large subunit methyltransferase Cfr (349 aa).

Glu89 acts as the Proton acceptor in catalysis. Residues 96–331 form the Radical SAM core domain; that stretch reads KAGWESFCIS…VTVRSQFGID (236 aa). Residues Cys103 and Cys336 are joined by a disulfide bond. The [4Fe-4S] cluster site is built by Cys110, Cys114, and Cys117. S-adenosyl-L-methionine-binding positions include 156–157, Ser187, 210–212, and Asn291; these read GE and SLH. The active-site S-methylcysteine intermediate is the Cys336.

This sequence belongs to the radical SAM superfamily. RlmN family. Cfr subfamily. It depends on [4Fe-4S] cluster as a cofactor.

The protein resides in the cytoplasm. It catalyses the reaction adenosine(2503) in 23S rRNA + 2 reduced [2Fe-2S]-[ferredoxin] + 2 S-adenosyl-L-methionine = 8-methyladenosine(2503) in 23S rRNA + 5'-deoxyadenosine + L-methionine + 2 oxidized [2Fe-2S]-[ferredoxin] + S-adenosyl-L-homocysteine. In terms of biological role, specifically methylates position 8 of adenine 2503 in 23S rRNA. Confers resistance to some classes of antibiotics. The polypeptide is Ribosomal RNA large subunit methyltransferase Cfr (Bacillus velezensis (strain DSM 23117 / BGSC 10A6 / LMG 26770 / FZB42) (Bacillus amyloliquefaciens subsp. plantarum)).